A 355-amino-acid polypeptide reads, in one-letter code: Peptide chain release factor 1 (355 aa).

Q233 bears the N5-methylglutamine mark.

The protein belongs to the prokaryotic/mitochondrial release factor family. Post-translationally, methylated by PrmC. Methylation increases the termination efficiency of RF1.

The protein localises to the cytoplasm. Functionally, peptide chain release factor 1 directs the termination of translation in response to the peptide chain termination codons UAG and UAA. The chain is Peptide chain release factor 1 from Syntrophomonas wolfei subsp. wolfei (strain DSM 2245B / Goettingen).